Here is a 792-residue protein sequence, read N- to C-terminus: DNA ligase (792 aa).

Residues 42–46, 91–92, and Glu124 contribute to the NAD(+) site; these read DAEYD and SL. Residue Lys126 is the N6-AMP-lysine intermediate of the active site. NAD(+)-binding residues include Arg147, Glu189, Lys306, and Lys330. Cys424, Cys426, Cys448, and Cys454 together coordinate Zn(2+). A BRCT domain is found at 714–792; that stretch reads KTDTAVAGKT…EDEWLAMVGG (79 aa).

This sequence belongs to the NAD-dependent DNA ligase family. LigA subfamily. Requires Mg(2+) as cofactor. It depends on Mn(2+) as a cofactor.

It carries out the reaction NAD(+) + (deoxyribonucleotide)n-3'-hydroxyl + 5'-phospho-(deoxyribonucleotide)m = (deoxyribonucleotide)n+m + AMP + beta-nicotinamide D-nucleotide.. Functionally, DNA ligase that catalyzes the formation of phosphodiester linkages between 5'-phosphoryl and 3'-hydroxyl groups in double-stranded DNA using NAD as a coenzyme and as the energy source for the reaction. It is essential for DNA replication and repair of damaged DNA. The sequence is that of DNA ligase from Caulobacter sp. (strain K31).